Consider the following 391-residue polypeptide: Solute carrier family 35 member F2 (391 aa).

The next 10 membrane-spanning stretches (helical) occupy residues 39-59 (MLLS…IRLT), 73-93 (LFQS…TLAV), 108-128 (WWKY…VVKA), 137-157 (IQLL…FFLL), 165-185 (FIGA…DVLM), 200-220 (LIGD…SVCQ), 230-250 (VELL…QLAI), 267-287 (LLYV…PVVI), 294-314 (AINL…LFLF), and 318-338 (FSGL…FYFS). Residues 361 to 391 (VELPSSGQLEPSVTYTSLSQETEEEPRVRVA) are disordered. A compositionally biased stretch (polar residues) spans 365–380 (SSGQLEPSVTYTSLSQ).

It belongs to the SLC35F solute transporter family.

It is found in the membrane. Functionally, putative solute transporter. This Xenopus tropicalis (Western clawed frog) protein is Solute carrier family 35 member F2 (slc35f2).